We begin with the raw amino-acid sequence, 187 residues long: uncharacterized protein (187 aa).

An N-terminal signal peptide occupies residues 1–25 (MSKFVKTAIAAAMVMGAFTSTATIA).

This sequence belongs to the fimbrial protein family.

Functionally, part of the yfcOPQRSUV fimbrial operon. Could contribute to adhesion to various surfaces in specific environmental niches. Increases adhesion to eukaryotic T24 bladder epithelial cells in the absence of fim genes. This is an uncharacterized protein from Escherichia coli (strain K12).